The sequence spans 127 residues: Large ribosomal subunit protein bL12c (127 aa).

The tract at residues 104-127 (GVAKDAAEEAKKQIEDAGGKASLK) is disordered. The span at 105–121 (VAKDAAEEAKKQIEDAG) shows a compositional bias: basic and acidic residues.

The protein belongs to the bacterial ribosomal protein bL12 family. Homodimer. Part of the ribosomal stalk of the 50S ribosomal subunit. Forms a multimeric L10(L12)X complex, where L10 forms an elongated spine to which 2 to 4 L12 dimers bind in a sequential fashion. Binds GTP-bound translation factors.

The protein resides in the plastid. It is found in the chloroplast. Functionally, forms part of the ribosomal stalk which helps the ribosome interact with GTP-bound translation factors. Is thus essential for accurate translation. This chain is Large ribosomal subunit protein bL12c, found in Trieres chinensis (Marine centric diatom).